The primary structure comprises 752 residues: DNA ligase (752 aa).

Residues 48 to 52 (DADYD), 97 to 98 (SL), and Glu131 contribute to the NAD(+) site. Lys133 (N6-AMP-lysine intermediate) is an active-site residue. NAD(+)-binding residues include Arg154, Glu189, Lys305, and Lys329. Residues Cys434, Cys437, Cys452, and Cys458 each contribute to the Zn(2+) site. A compositionally biased stretch (basic and acidic residues) spans 599-615 (ADEGRRASLQPQRDKAW). The tract at residues 599-618 (ADEGRRASLQPQRDKAWADT) is disordered. Residues 673–752 (ATQSAVAGLT…EQWLDRIGDA (80 aa)) enclose the BRCT domain.

It belongs to the NAD-dependent DNA ligase family. LigA subfamily. Mg(2+) serves as cofactor. The cofactor is Mn(2+).

It catalyses the reaction NAD(+) + (deoxyribonucleotide)n-3'-hydroxyl + 5'-phospho-(deoxyribonucleotide)m = (deoxyribonucleotide)n+m + AMP + beta-nicotinamide D-nucleotide.. Its function is as follows. DNA ligase that catalyzes the formation of phosphodiester linkages between 5'-phosphoryl and 3'-hydroxyl groups in double-stranded DNA using NAD as a coenzyme and as the energy source for the reaction. It is essential for DNA replication and repair of damaged DNA. This is DNA ligase from Jannaschia sp. (strain CCS1).